The primary structure comprises 315 residues: 4-hydroxy-3-methylbut-2-enyl diphosphate reductase (315 aa).

C12 provides a ligand contact to [4Fe-4S] cluster. The (2E)-4-hydroxy-3-methylbut-2-enyl diphosphate site is built by H43 and H81. Dimethylallyl diphosphate-binding residues include H43 and H81. Isopentenyl diphosphate contacts are provided by H43 and H81. C103 contributes to the [4Fe-4S] cluster binding site. H131 contacts (2E)-4-hydroxy-3-methylbut-2-enyl diphosphate. H131 contributes to the dimethylallyl diphosphate binding site. H131 provides a ligand contact to isopentenyl diphosphate. The Proton donor role is filled by E133. T170 is a (2E)-4-hydroxy-3-methylbut-2-enyl diphosphate binding site. C198 contacts [4Fe-4S] cluster. (2E)-4-hydroxy-3-methylbut-2-enyl diphosphate is bound by residues S226, N228, and S271. 3 residues coordinate dimethylallyl diphosphate: S226, N228, and S271. Isopentenyl diphosphate contacts are provided by S226, N228, and S271.

Belongs to the IspH family. [4Fe-4S] cluster is required as a cofactor.

The catalysed reaction is isopentenyl diphosphate + 2 oxidized [2Fe-2S]-[ferredoxin] + H2O = (2E)-4-hydroxy-3-methylbut-2-enyl diphosphate + 2 reduced [2Fe-2S]-[ferredoxin] + 2 H(+). The enzyme catalyses dimethylallyl diphosphate + 2 oxidized [2Fe-2S]-[ferredoxin] + H2O = (2E)-4-hydroxy-3-methylbut-2-enyl diphosphate + 2 reduced [2Fe-2S]-[ferredoxin] + 2 H(+). The protein operates within isoprenoid biosynthesis; dimethylallyl diphosphate biosynthesis; dimethylallyl diphosphate from (2E)-4-hydroxy-3-methylbutenyl diphosphate: step 1/1. It functions in the pathway isoprenoid biosynthesis; isopentenyl diphosphate biosynthesis via DXP pathway; isopentenyl diphosphate from 1-deoxy-D-xylulose 5-phosphate: step 6/6. Catalyzes the conversion of 1-hydroxy-2-methyl-2-(E)-butenyl 4-diphosphate (HMBPP) into a mixture of isopentenyl diphosphate (IPP) and dimethylallyl diphosphate (DMAPP). Acts in the terminal step of the DOXP/MEP pathway for isoprenoid precursor biosynthesis. The polypeptide is 4-hydroxy-3-methylbut-2-enyl diphosphate reductase (Geobacillus sp. (strain WCH70)).